Consider the following 98-residue polypeptide: Large ribosomal subunit protein bL27 (98 aa).

Residues 1-13 (MKKIWFHLDLQFF) constitute a propeptide that is removed on maturation.

The protein belongs to the bacterial ribosomal protein bL27 family. The N-terminus is cleaved by ribosomal processing cysteine protease Prp.

The sequence is that of Large ribosomal subunit protein bL27 from Mycoplasmoides gallisepticum (strain R(low / passage 15 / clone 2)) (Mycoplasma gallisepticum).